A 392-amino-acid chain; its full sequence is Galactokinase (392 aa).

The alpha-D-galactose site is built by Arg37, Glu43, His44, and Asp46. Gly136, Gly138, Ser140, and Ser141 together coordinate ATP. Asp186 provides a ligand contact to alpha-D-galactose. Catalysis depends on Asp186, which acts as the Proton acceptor. Ser230 is subject to Phosphoserine. Tyr236 contacts alpha-D-galactose.

Belongs to the GHMP kinase family. GalK subfamily. In terms of assembly, homodimer.

It catalyses the reaction alpha-D-galactose + ATP = alpha-D-galactose 1-phosphate + ADP + H(+). It functions in the pathway carbohydrate metabolism; galactose metabolism. Its function is as follows. Catalyzes the transfer of a phosphate from ATP to alpha-D-galactose and participates in the first committed step in the catabolism of galactose. This chain is Galactokinase (GALK1), found in Bos taurus (Bovine).